The primary structure comprises 207 residues: MTSSVRIVGDPSRFAEQLVSSIAEHVESRVREALEAARKIVERAYEESASKLESELRRALREAEEQVQAYTAKREVELRKRLAEIRAKAVEEIMSVALQRLREYVGLEAYKEFIKRLLDSALETASRRSRRVIVHPARPDQAIVAELAPRVAAEKGIEVEVGEAVEGAGGFTVRAVEAGLTLDYRLEVILAPALEEARARVLEVLNQ.

This sequence belongs to the V-ATPase E subunit family. In terms of assembly, has multiple subunits with at least A(3), B(3), C, D, E, F, H, I and proteolipid K(x).

Its subcellular location is the cell membrane. In terms of biological role, component of the A-type ATP synthase that produces ATP from ADP in the presence of a proton gradient across the membrane. This Hyperthermus butylicus (strain DSM 5456 / JCM 9403 / PLM1-5) protein is A-type ATP synthase subunit E.